Here is a 106-residue protein sequence, read N- to C-terminus: Large ribosomal subunit protein uL24 (106 aa).

The protein belongs to the universal ribosomal protein uL24 family. As to quaternary structure, part of the 50S ribosomal subunit.

One of two assembly initiator proteins, it binds directly to the 5'-end of the 23S rRNA, where it nucleates assembly of the 50S subunit. In terms of biological role, one of the proteins that surrounds the polypeptide exit tunnel on the outside of the subunit. This is Large ribosomal subunit protein uL24 from Thermosipho africanus (strain TCF52B).